We begin with the raw amino-acid sequence, 121 residues long: Non-structural protein 8 (121 aa).

The signal sequence occupies residues 1-15; that stretch reads MKLLIVFGLLTSVYC. An SARS ORF8 Ig-like domain is found at 19–121; that stretch reads ECSIQECCEN…HDVRVVLDFI (103 aa). Cystine bridges form between Cys-25–Cys-90, Cys-37–Cys-102, and Cys-61–Cys-83.

The sequence is that of Non-structural protein 8 from Rhinolophus macrotis (Big-eared horseshoe bat).